The primary structure comprises 182 residues: Probable RNA 2'-phosphotransferase (182 aa).

The protein belongs to the KptA/TPT1 family.

Removes the 2'-phosphate from RNA via an intermediate in which the phosphate is ADP-ribosylated by NAD followed by a presumed transesterification to release the RNA and generate ADP-ribose 1''-2''-cyclic phosphate (APPR&gt;P). May function as an ADP-ribosylase. The protein is Probable RNA 2'-phosphotransferase of Pseudomonas fluorescens (strain ATCC BAA-477 / NRRL B-23932 / Pf-5).